A 221-amino-acid polypeptide reads, in one-letter code: Probable glutathione S-transferase (221 aa).

One can recognise a GST N-terminal domain in the interval glutamate 4 to alanine 83. Residues serine 14, lysine 41, isoleucine 55, and glutamate 67 to serine 68 contribute to the glutathione site. Positions aspartate 90 to leucine 214 constitute a GST C-terminal domain.

This sequence belongs to the GST superfamily. HSP26 family. In terms of tissue distribution, root tip-specific expression.

The catalysed reaction is RX + glutathione = an S-substituted glutathione + a halide anion + H(+). The polypeptide is Probable glutathione S-transferase (Nicotiana tabacum (Common tobacco)).